A 301-amino-acid polypeptide reads, in one-letter code: Nucleotide-binding protein Rfer_1653 (301 aa).

15-22 (GMSGSGKS) lines the ATP pocket. 64 to 67 (DVRT) contributes to the GTP binding site.

It belongs to the RapZ-like family.

Functionally, displays ATPase and GTPase activities. The sequence is that of Nucleotide-binding protein Rfer_1653 from Albidiferax ferrireducens (strain ATCC BAA-621 / DSM 15236 / T118) (Rhodoferax ferrireducens).